The following is a 53-amino-acid chain: Conotoxin Cal6.27 (53 aa).

Positions 1–24 (MKLTCVLIAAMLLLAVCQLDSADA) are cleaved as a signal peptide. Disulfide bonds link Cys-29–Cys-43, Cys-36–Cys-47, and Cys-42–Cys-51.

This sequence belongs to the conotoxin O1 superfamily. As to expression, expressed by the venom duct.

It localises to the secreted. Functionally, probable neurotoxin. This is Conotoxin Cal6.27 from Californiconus californicus (California cone).